A 203-amino-acid polypeptide reads, in one-letter code: NADH-quinone oxidoreductase subunit C (203 aa).

The protein belongs to the complex I 30 kDa subunit family. As to quaternary structure, NDH-1 is composed of 14 different subunits. Subunits NuoB, C, D, E, F, and G constitute the peripheral sector of the complex.

The protein resides in the cell inner membrane. The catalysed reaction is a quinone + NADH + 5 H(+)(in) = a quinol + NAD(+) + 4 H(+)(out). Its function is as follows. NDH-1 shuttles electrons from NADH, via FMN and iron-sulfur (Fe-S) centers, to quinones in the respiratory chain. The immediate electron acceptor for the enzyme in this species is believed to be ubiquinone. Couples the redox reaction to proton translocation (for every two electrons transferred, four hydrogen ions are translocated across the cytoplasmic membrane), and thus conserves the redox energy in a proton gradient. The protein is NADH-quinone oxidoreductase subunit C of Delftia acidovorans (strain DSM 14801 / SPH-1).